We begin with the raw amino-acid sequence, 100 residues long: uncharacterized protein (100 aa).

This sequence to M.jannaschii MJ1155.1.

This is an uncharacterized protein from Archaeoglobus fulgidus (strain ATCC 49558 / DSM 4304 / JCM 9628 / NBRC 100126 / VC-16).